Consider the following 462-residue polypeptide: L-seryl-tRNA(Sec) selenium transferase (462 aa).

The residue at position 292 (Lys292) is an N6-(pyridoxal phosphate)lysine.

This sequence belongs to the SelA family. Requires pyridoxal 5'-phosphate as cofactor.

It localises to the cytoplasm. It carries out the reaction L-seryl-tRNA(Sec) + selenophosphate + H(+) = L-selenocysteinyl-tRNA(Sec) + phosphate. Its pathway is aminoacyl-tRNA biosynthesis; selenocysteinyl-tRNA(Sec) biosynthesis; selenocysteinyl-tRNA(Sec) from L-seryl-tRNA(Sec) (bacterial route): step 1/1. Converts seryl-tRNA(Sec) to selenocysteinyl-tRNA(Sec) required for selenoprotein biosynthesis. In Geotalea uraniireducens (strain Rf4) (Geobacter uraniireducens), this protein is L-seryl-tRNA(Sec) selenium transferase.